A 455-amino-acid polypeptide reads, in one-letter code: Proline--tRNA ligase (455 aa).

Positions 101, 103, and 132 each coordinate L-proline. ATP contacts are provided by Arg-132, Glu-134, Gln-216, and Thr-219. Residue His-221 participates in L-proline binding. Residues Ser-253 and Arg-255 each coordinate ATP. Residues 329 to 359 (EIKGVPLRIEVGPKDIENKKITLFRRDTMEK) form an interaction with tRNA region.

This sequence belongs to the class-II aminoacyl-tRNA synthetase family. ProS type 3 subfamily. In terms of assembly, homodimer. The dimer is functionally asymmetric: only one of the two active sites at a time is able to form prolyl-adenylate, and only one tRNA molecule binds per dimer.

The protein resides in the cytoplasm. The enzyme catalyses tRNA(Pro) + L-proline + ATP = L-prolyl-tRNA(Pro) + AMP + diphosphate. Inhibited by high concentrations of prolinamide. Functionally, catalyzes the attachment of proline to tRNA(Pro) in a two-step reaction: proline is first activated by ATP to form Pro-AMP and then transferred to the acceptor end of tRNA(Pro). Can inadvertently accommodate and process non-cognate amino acids such as cysteine and alanine. This Methanocaldococcus jannaschii (strain ATCC 43067 / DSM 2661 / JAL-1 / JCM 10045 / NBRC 100440) (Methanococcus jannaschii) protein is Proline--tRNA ligase (proS).